A 326-amino-acid chain; its full sequence is N-acetyl-gamma-glutamyl-phosphate reductase (326 aa).

The active site involves Cys-155.

The protein belongs to the NAGSA dehydrogenase family. Type 1 subfamily.

It localises to the cytoplasm. It catalyses the reaction N-acetyl-L-glutamate 5-semialdehyde + phosphate + NADP(+) = N-acetyl-L-glutamyl 5-phosphate + NADPH + H(+). It functions in the pathway amino-acid biosynthesis; L-arginine biosynthesis; N(2)-acetyl-L-ornithine from L-glutamate: step 3/4. Catalyzes the NADPH-dependent reduction of N-acetyl-5-glutamyl phosphate to yield N-acetyl-L-glutamate 5-semialdehyde. The chain is N-acetyl-gamma-glutamyl-phosphate reductase from Shewanella baltica (strain OS155 / ATCC BAA-1091).